Consider the following 435-residue polypeptide: Dual specificity protein kinase FUZ7 (435 aa).

A disordered region spans residues 1 to 61; the sequence is MLSSGAGSSI…TIGKSSAVTP (61 aa). Over residues 46-59 the composition is skewed to polar residues; sequence AASNASTIGKSSAV. The Protein kinase domain maps to 109 to 417; it reads LKTLSELGAG…PKDLTKHQYV (309 aa). Residues 115–123 and K138 each bind ATP; that span reads LGAGNGGTV. The active-site Proton acceptor is the D231. The interval 307-359 is disordered; it reads NEEDDDSDADNNYTNEDLAGTLSPTKPAPMISLGQNEKQRRRKSKPAGVSLEG.

The protein belongs to the protein kinase superfamily. STE Ser/Thr protein kinase family. MAP kinase kinase subfamily.

The catalysed reaction is L-seryl-[protein] + ATP = O-phospho-L-seryl-[protein] + ADP + H(+). It catalyses the reaction L-threonyl-[protein] + ATP = O-phospho-L-threonyl-[protein] + ADP + H(+). It carries out the reaction L-tyrosyl-[protein] + ATP = O-phospho-L-tyrosyl-[protein] + ADP + H(+). Its function is as follows. Protein kinase that is necessary for a-locus-dependent processes, such as conjugation tube formation, filament formation, and maintenance of filamentous growth, and for a-locus-independent processes, such as tumor induction and teliospore germination. The chain is Dual specificity protein kinase FUZ7 (FUZ7) from Mycosarcoma maydis (Corn smut fungus).